The sequence spans 416 residues: Maltoporin (416 aa).

The signal sequence occupies residues 1 to 26; sequence MELTMKKVSVIAAAVAATLAAGSAFA.

The protein belongs to the porin LamB (TC 1.B.3) family. Homotrimer formed of three 18-stranded antiparallel beta-barrels, containing three independent channels.

The protein localises to the cell outer membrane. The catalysed reaction is beta-maltose(in) = beta-maltose(out). Functionally, involved in the transport of maltose and maltodextrins. The polypeptide is Maltoporin (Vibrio cholerae serotype O1 (strain ATCC 39541 / Classical Ogawa 395 / O395)).